The chain runs to 347 residues: Biotin synthase (347 aa).

The Radical SAM core domain maps to 40–258; that stretch reads AQVQVSTLLS…IAVARIAMPR (219 aa). 3 residues coordinate [4Fe-4S] cluster: C55, C59, and C62. C99, C130, C190, and R262 together coordinate [2Fe-2S] cluster.

It belongs to the radical SAM superfamily. Biotin synthase family. In terms of assembly, homodimer. [4Fe-4S] cluster is required as a cofactor. [2Fe-2S] cluster serves as cofactor.

It catalyses the reaction (4R,5S)-dethiobiotin + (sulfur carrier)-SH + 2 reduced [2Fe-2S]-[ferredoxin] + 2 S-adenosyl-L-methionine = (sulfur carrier)-H + biotin + 2 5'-deoxyadenosine + 2 L-methionine + 2 oxidized [2Fe-2S]-[ferredoxin]. Its pathway is cofactor biosynthesis; biotin biosynthesis; biotin from 7,8-diaminononanoate: step 2/2. Catalyzes the conversion of dethiobiotin (DTB) to biotin by the insertion of a sulfur atom into dethiobiotin via a radical-based mechanism. The polypeptide is Biotin synthase (Stenotrophomonas maltophilia (strain K279a)).